Reading from the N-terminus, the 198-residue chain is Fucoxanthin-chlorophyll a-c binding protein B, chloroplastic (198 aa).

Residues 1-31 (MKFTVFASLFASAAAFAPAQQAARTSVATNM) constitute a chloroplast transit peptide. Helical transmembrane passes span 73-94 (ISML…GGDI), 114-134 (IPQA…TSVM), and 174-196 (GRAA…NILP).

It belongs to the fucoxanthin chlorophyll protein family. The LHC complex of chromophytic algae is composed of fucoxanthin, chlorophyll A and C bound non-covalently by fucoxanthin chlorophyll proteins (FCPs). The ratio of the pigments in LHC; fucoxanthin: chlorophyll C: chlorophyll A; (0.6-1): (0.1-0.3): (1).

The protein resides in the plastid. Its subcellular location is the chloroplast thylakoid membrane. Functionally, the light-harvesting complex (LHC) functions as a light receptor, it captures and delivers excitation energy to photosystems with which it is closely associated. Energy is transferred from the carotenoid and chlorophyll C (or B) to chlorophyll A and the photosynthetic reaction centers where it is used to synthesize ATP and reducing power. The chain is Fucoxanthin-chlorophyll a-c binding protein B, chloroplastic (FCPB) from Phaeodactylum tricornutum (Diatom).